Here is a 358-residue protein sequence, read N- to C-terminus: Probable cinnamyl alcohol dehydrogenase (358 aa).

C48 serves as a coordination point for Zn(2+). Residue S50 coordinates NADP(+). 7 residues coordinate Zn(2+): H70, E71, C101, C104, C107, C115, and C164. Residues T168, 189-194 (GLGGVG), 212-217 (SSSDKK), T252, G276, and 299-301 (SFV) each bind NADP(+).

The protein belongs to the zinc-containing alcohol dehydrogenase family. As to quaternary structure, homodimer. Zn(2+) is required as a cofactor. Most actively expressed in stem, hypocotyl and root tissue.

The catalysed reaction is (E)-cinnamyl alcohol + NADP(+) = (E)-cinnamaldehyde + NADPH + H(+). The enzyme catalyses (E)-coniferol + NADP(+) = (E)-coniferaldehyde + NADPH + H(+). It catalyses the reaction (E)-sinapyl alcohol + NADP(+) = (E)-sinapaldehyde + NADPH + H(+). It carries out the reaction (E)-4-coumaroyl alcohol + NADP(+) = (E)-4-coumaraldehyde + NADPH + H(+). The catalysed reaction is (E)-caffeyl alcohol + NADP(+) = (E)-caffeyl aldehyde + NADPH + H(+). The protein operates within aromatic compound metabolism; phenylpropanoid biosynthesis. Its function is as follows. This protein catalyzes the final step in a branch of phenylpropanoid synthesis specific for production of lignin monomers. It acts on coniferyl-, sinapyl-, 4-coumaryl- and cinnamyl-alcohol. The chain is Probable cinnamyl alcohol dehydrogenase (CAD2) from Medicago sativa (Alfalfa).